The following is a 65-amino-acid chain: Sodium channel neurotoxin MeuNaTxalpha-9 (65 aa).

Positions 2-64 (RDGYIANDRN…VPIRIPGECR (63 aa)) constitute an LCN-type CS-alpha/beta domain. 4 cysteine pairs are disulfide-bonded: Cys-12-Cys-63, Cys-16-Cys-36, Cys-22-Cys-46, and Cys-26-Cys-48. At Arg-64 the chain carries Arginine amide.

Belongs to the long (4 C-C) scorpion toxin superfamily. Sodium channel inhibitor family. Alpha subfamily. In terms of tissue distribution, expressed by the venom gland.

The protein localises to the secreted. Functionally, alpha toxins bind voltage-independently at site-3 of sodium channels (Nav) and inhibit the inactivation of the activated channels, thereby blocking neuronal transmission. The protein is Sodium channel neurotoxin MeuNaTxalpha-9 of Mesobuthus eupeus (Lesser Asian scorpion).